A 439-amino-acid polypeptide reads, in one-letter code: Tol-Pal system protein TolB (439 aa).

The N-terminal stretch at 1–22 (MKKPLRWLAALTALLLPLSAFA) is a signal peptide.

Belongs to the TolB family. As to quaternary structure, the Tol-Pal system is composed of five core proteins: the inner membrane proteins TolA, TolQ and TolR, the periplasmic protein TolB and the outer membrane protein Pal. They form a network linking the inner and outer membranes and the peptidoglycan layer.

The protein localises to the periplasm. Its function is as follows. Part of the Tol-Pal system, which plays a role in outer membrane invagination during cell division and is important for maintaining outer membrane integrity. In Xanthomonas campestris pv. campestris (strain 8004), this protein is Tol-Pal system protein TolB.